A 185-amino-acid polypeptide reads, in one-letter code: Threonylcarbamoyl-AMP synthase (185 aa).

The 182-residue stretch at 4-185 (SFRVQQAARE…LATGEVVRPG (182 aa)) folds into the YrdC-like domain.

This sequence belongs to the SUA5 family. TsaC subfamily.

The protein resides in the cytoplasm. The enzyme catalyses L-threonine + hydrogencarbonate + ATP = L-threonylcarbamoyladenylate + diphosphate + H2O. Functionally, required for the formation of a threonylcarbamoyl group on adenosine at position 37 (t(6)A37) in tRNAs that read codons beginning with adenine. Catalyzes the conversion of L-threonine, HCO(3)(-)/CO(2) and ATP to give threonylcarbamoyl-AMP (TC-AMP) as the acyladenylate intermediate, with the release of diphosphate. The protein is Threonylcarbamoyl-AMP synthase of Pseudomonas putida (strain ATCC 47054 / DSM 6125 / CFBP 8728 / NCIMB 11950 / KT2440).